A 272-amino-acid chain; its full sequence is Granaticin polyketide synthase putative ketoacyl reductase 1 (272 aa).

Residue 21–45 (LVTGATSGIGLAIARRLAALGARTF) participates in NAD(+) binding. S155 provides a ligand contact to substrate. Residue Y168 is the Proton acceptor of the active site.

It belongs to the short-chain dehydrogenases/reductases (SDR) family.

Its pathway is antibiotic biosynthesis; granaticin biosynthesis. The polypeptide is Granaticin polyketide synthase putative ketoacyl reductase 1 (gra-orf5) (Streptomyces violaceoruber).